Here is a 442-residue protein sequence, read N- to C-terminus: Hydrolase phmG (442 aa).

Serine 259 (nucleophile) is an active-site residue.

The protein belongs to the AB hydrolase superfamily. FUS2 hydrolase family. As to quaternary structure, homodimer.

It functions in the pathway mycotoxin biosynthesis. Functionally, hydrolyase; part of the gene cluster that mediates the biosynthesis of the mycotoxins phomacins, leucine-derived cytochalasans with potent actin polymerization-inhibitory activities and monocot-specific antigerminative activities. The first step in the pathway is catalyzed by the hybrid PKS-NRPS phmA, assisted by the enoyl reductase phmE, that are responsible for fusion of the leucine precursor and the polyketide backbone to produce a 2-pyrrolidone intermediate. The polyketide synthase module (PKS) of phmA is responsible for the synthesis of the polyketide backbone and the downstream nonribosomal peptide synthetase (NRPS) amidates the carboxyl end of the polyketide with the leucine precursor. Because phmA lacks a designated enoylreductase (ER) domain, the required activity is provided the enoyl reductase phmE. Reduction by the hydrolyase phmG, followed by dehydration and intra-molecular Diels-Alder cyclization by the Diels-Alderase phmD then yield the required isoindolone-fused macrocycle. A number of oxidative steps catalyzed by the tailoring cytochrome P450 monooxygenase phmB, the FAD-linked oxidoreductase phmC and the short-chain dehydrogenase/reductase phmF, are further required to afford the final products, phomacin D and phomacin E. This chain is Hydrolase phmG, found in Phaeosphaeria nodorum (strain SN15 / ATCC MYA-4574 / FGSC 10173) (Glume blotch fungus).